The chain runs to 927 residues: Translation initiation factor IF-2 (927 aa).

Residues 27-338 (LGLPVKSHAS…APKPVTERKF (312 aa)) form a disordered region. Positions 49-69 (SFSSSKTKAPTNSVQTNQGVK) are enriched in polar residues. Composition is skewed to basic and acidic residues over residues 70-86 (TESK…DDKP) and 101-138 (FKAE…DRRH). A compositionally biased stretch (low complexity) spans 146 to 159 (GNRNDNRQGQQNNR). Basic and acidic residues-rich tracts occupy residues 160–171 (NKNDGRYADHKQ), 202–226 (YSRH…EQEL), and 234–257 (AQEE…KEIV). Residues 300–316 (NWNNQNQVRNQRNSNWN) show a composition bias toward low complexity. The tr-type G domain maps to 428–597 (ERPPVVTIMG…LLVAEMEELK (170 aa)). The tract at residues 437 to 444 (GHVDHGKT) is G1. Position 437–444 (437–444 (GHVDHGKT)) interacts with GTP. The tract at residues 462–466 (GITQH) is G2. Residues 483 to 486 (DTPG) form a G3 region. GTP-binding positions include 483–487 (DTPGH) and 537–540 (NKID). Positions 537 to 540 (NKID) are G4. Residues 573-575 (SAK) form a G5 region.

This sequence belongs to the TRAFAC class translation factor GTPase superfamily. Classic translation factor GTPase family. IF-2 subfamily.

It localises to the cytoplasm. Functionally, one of the essential components for the initiation of protein synthesis. Protects formylmethionyl-tRNA from spontaneous hydrolysis and promotes its binding to the 30S ribosomal subunits. Also involved in the hydrolysis of GTP during the formation of the 70S ribosomal complex. The sequence is that of Translation initiation factor IF-2 from Streptococcus agalactiae serotype Ia (strain ATCC 27591 / A909 / CDC SS700).